The chain runs to 345 residues: MAWRSGLCETDSRTLKQFLQEECMWKLVGKSRKHREYRAVACRSTIFSPEDDSSCILCQLLLLYRDGEWIICFCCNGRYQGHYGVNHVHRRRRRICHLPTLYQLSFGGPLGPASIDFLPSFSQVTSSMTCDGITPDVIYEVCMLVPQDEAKRILVKGHGAMDLTCQKAVTLGGAGAWLLPRPEGYTLFFYILCYDLFTSCGNRCDIPSMTRLMAAATACGQAGCSFCTDHEGHVDPTGNYVGCTPDMGRCLCYVPCGPMTQSLIHNEEPATFFCESDDAKYLCAVGSKTAAQVTLGDGLDYHIGVKDSEGRWLPVKTDVWDLVKVEEPVSRMIVCSCPVLKNLVH.

A nuclear localization signal 1 region spans residues 26–35 (KLVGKSRKHR). A nuclear export signal region spans residues 55–63 (CILCQLLLL). The segment at 90 to 94 (RRRRR) is nuclear localization signal 2.

The protein belongs to the herpesviridae cytoplasmic envelopment protein 2 family. Interacts with cytoplasmic envelopment protein 3 and with the capsid. Interacts with host STING1; this interaction prevents viral DNA-triggered antiviral immune response.

It localises to the virion tegument. The protein resides in the host cytoplasm. Its subcellular location is the host nucleus. Functionally, plays a critical role in cytoplasmic virus egress. Participates in the final step of tegumentation and envelope acquisition within the host cytoplasm by directly interacting with the capsid. Upon virion binding to target cell, a signaling cascade is triggered to disrupt the interaction with the capsid, thereby preparing capsid uncoating. Additionally, antagonizes the viral DNA-triggered antiviral immune response by targeting host STING1 and preventing its dimerization and trafficking. In Human cytomegalovirus (strain AD169) (HHV-5), this protein is Cytoplasmic envelopment protein 2 (UL94).